The sequence spans 119 residues: Large ribosomal subunit protein bL20 (119 aa).

The protein belongs to the bacterial ribosomal protein bL20 family.

In terms of biological role, binds directly to 23S ribosomal RNA and is necessary for the in vitro assembly process of the 50S ribosomal subunit. It is not involved in the protein synthesizing functions of that subunit. The chain is Large ribosomal subunit protein bL20 from Listeria innocua serovar 6a (strain ATCC BAA-680 / CLIP 11262).